The following is a 178-amino-acid chain: PEST proteolytic signal-containing nuclear protein (178 aa).

A compositionally biased stretch (basic and acidic residues) spans 1–15 (MADGKAGDEKPEKSQ). Residues 1–82 (MADGKAGDEK…FAIGSQTTKK (82 aa)) are disordered. Alanine 2 is subject to N-acetylalanine. The span at 37–47 (SSSNGGESSSR) shows a compositional bias: low complexity. A Phosphoserine modification is found at serine 53. Lysine 64 carries the N6-acetyllysine modification. Phosphoserine is present on residues serine 77, serine 87, and serine 119. The tract at residues 134-178 (NIGRDTPTSAGPNSFNKGKHGFSDNQKLWERNIKSHLGNVHDQDN) is disordered. Threonine 139 is subject to Phosphothreonine. Residues 139–149 (TPTSAGPNSFN) are compositionally biased toward polar residues. Position 147 is a phosphoserine (serine 147). An N6-acetyllysine mark is found at lysine 150 and lysine 152. Residues 160–178 (KLWERNIKSHLGNVHDQDN) show a composition bias toward basic and acidic residues.

As to quaternary structure, interacts with UHRF2/NIRF. In terms of processing, ubiquitinated; mediated by UHRF2 and leading to its subsequent proteasomal degradation. N-terminally acetylated in a HYPK-dependent manner by the NatA acetyltransferase complex which is composed of NAA10 and NAA15.

The protein resides in the nucleus. May be involved in cell cycle regulation. The protein is PEST proteolytic signal-containing nuclear protein (PCNP) of Homo sapiens (Human).